The sequence spans 145 residues: D-aminoacyl-tRNA deacylase (145 aa).

The Gly-cisPro motif, important for rejection of L-amino acids signature appears at 137-138 (GP).

It belongs to the DTD family. In terms of assembly, homodimer.

It is found in the cytoplasm. It carries out the reaction glycyl-tRNA(Ala) + H2O = tRNA(Ala) + glycine + H(+). It catalyses the reaction a D-aminoacyl-tRNA + H2O = a tRNA + a D-alpha-amino acid + H(+). Functionally, an aminoacyl-tRNA editing enzyme that deacylates mischarged D-aminoacyl-tRNAs. Also deacylates mischarged glycyl-tRNA(Ala), protecting cells against glycine mischarging by AlaRS. Acts via tRNA-based rather than protein-based catalysis; rejects L-amino acids rather than detecting D-amino acids in the active site. By recycling D-aminoacyl-tRNA to D-amino acids and free tRNA molecules, this enzyme counteracts the toxicity associated with the formation of D-aminoacyl-tRNA entities in vivo and helps enforce protein L-homochirality. The chain is D-aminoacyl-tRNA deacylase from Pseudomonas paraeruginosa (strain DSM 24068 / PA7) (Pseudomonas aeruginosa (strain PA7)).